Reading from the N-terminus, the 478-residue chain is Cytochrome c-552 (478 aa).

The signal sequence occupies residues 1–26 (MTRIKINARRIFSLLIPFFFFTSVHA). Histidine 94 lines the heme c pocket. Residues cysteine 122, cysteine 125, and lysine 126 each coordinate heme. Residues cysteine 160, cysteine 163, histidine 164, cysteine 209, cysteine 212, and histidine 213 each coordinate heme c. Residues glutamate 215, tyrosine 216, lysine 261, and glutamine 263 each coordinate Ca(2+). Position 216 (tyrosine 216) interacts with substrate. Histidine 264 is a substrate binding site. Residues histidine 275, cysteine 282, cysteine 285, histidine 286, histidine 301, cysteine 314, cysteine 317, histidine 318, and histidine 393 each contribute to the heme c site.

This sequence belongs to the cytochrome c-552 family. Ca(2+) is required as a cofactor. Heme c serves as cofactor.

It localises to the periplasm. It carries out the reaction 6 Fe(III)-[cytochrome c] + NH4(+) + 2 H2O = 6 Fe(II)-[cytochrome c] + nitrite + 8 H(+). The protein operates within nitrogen metabolism; nitrate reduction (assimilation). Functionally, catalyzes the reduction of nitrite to ammonia, consuming six electrons in the process. This Escherichia coli (strain ATCC 8739 / DSM 1576 / NBRC 3972 / NCIMB 8545 / WDCM 00012 / Crooks) protein is Cytochrome c-552.